Here is a 158-residue protein sequence, read N- to C-terminus: NADH-quinone oxidoreductase subunit B 2 (158 aa).

[4Fe-4S] cluster contacts are provided by Cys-37, Cys-38, Cys-102, and Cys-132.

The protein belongs to the complex I 20 kDa subunit family. As to quaternary structure, NDH-1 is composed of 14 different subunits. Subunits NuoB, C, D, E, F, and G constitute the peripheral sector of the complex. The cofactor is [4Fe-4S] cluster.

The protein localises to the cell inner membrane. The enzyme catalyses a quinone + NADH + 5 H(+)(in) = a quinol + NAD(+) + 4 H(+)(out). In terms of biological role, NDH-1 shuttles electrons from NADH, via FMN and iron-sulfur (Fe-S) centers, to quinones in the respiratory chain. Couples the redox reaction to proton translocation (for every two electrons transferred, four hydrogen ions are translocated across the cytoplasmic membrane), and thus conserves the redox energy in a proton gradient. The chain is NADH-quinone oxidoreductase subunit B 2 from Acidithiobacillus ferrooxidans (strain ATCC 53993 / BNL-5-31) (Leptospirillum ferrooxidans (ATCC 53993)).